A 249-amino-acid polypeptide reads, in one-letter code: tRNA pseudouridine synthase A (249 aa).

The Nucleophile role is filled by Asp-53. Tyr-111 serves as a coordination point for substrate.

Belongs to the tRNA pseudouridine synthase TruA family. As to quaternary structure, homodimer.

The catalysed reaction is uridine(38/39/40) in tRNA = pseudouridine(38/39/40) in tRNA. Formation of pseudouridine at positions 38, 39 and 40 in the anticodon stem and loop of transfer RNAs. The sequence is that of tRNA pseudouridine synthase A from Streptococcus pneumoniae (strain Taiwan19F-14).